The primary structure comprises 227 residues: UPF0173 metal-dependent hydrolase BALH_4194 (227 aa).

The protein belongs to the UPF0173 family.

This is UPF0173 metal-dependent hydrolase BALH_4194 from Bacillus thuringiensis (strain Al Hakam).